Reading from the N-terminus, the 133-residue chain is Thioredoxin-2, mitochondrial (133 aa).

The N-terminal 29 residues, 1–29 (MRGFIANSLKPHMRSFALRRSFTSSRILR), are a transit peptide targeting the mitochondrion. One can recognise a Thioredoxin domain in the interval 30–133 (KVNAVESFGD…LSSLLAKYQE (104 aa)). Residues cysteine 59 and cysteine 62 each act as nucleophile in the active site. A disulfide bridge links cysteine 59 with cysteine 62.

It belongs to the thioredoxin family. As to quaternary structure, interacts with arg3.

Its subcellular location is the mitochondrion. Functionally, disulfide reductase which serves multiple functions in mitochondria, protecting mitochondrial components against thiol-oxidative damage as a thiol-disulfide oxidoreductase, and supporting urea cycle and respiration in mitochondria in a manner independent of active site thiols. This is Thioredoxin-2, mitochondrial (trx2) from Schizosaccharomyces pombe (strain 972 / ATCC 24843) (Fission yeast).